The sequence spans 323 residues: Thymidylate synthase (323 aa).

DUMP contacts are provided by residues R21 and 172-173 (RR). Catalysis depends on C192, which acts as the Nucleophile. DUMP-binding positions include 214 to 217 (RSND), N225, and 255 to 257 (HVY). D217 contacts (6R)-5,10-methylene-5,6,7,8-tetrahydrofolate. A (6R)-5,10-methylene-5,6,7,8-tetrahydrofolate-binding site is contributed by A322.

It belongs to the thymidylate synthase family. Bacterial-type ThyA subfamily. In terms of assembly, homodimer.

Its subcellular location is the cytoplasm. It catalyses the reaction dUMP + (6R)-5,10-methylene-5,6,7,8-tetrahydrofolate = 7,8-dihydrofolate + dTMP. The protein operates within pyrimidine metabolism; dTTP biosynthesis. Functionally, catalyzes the reductive methylation of 2'-deoxyuridine-5'-monophosphate (dUMP) to 2'-deoxythymidine-5'-monophosphate (dTMP) while utilizing 5,10-methylenetetrahydrofolate (mTHF) as the methyl donor and reductant in the reaction, yielding dihydrofolate (DHF) as a by-product. This enzymatic reaction provides an intracellular de novo source of dTMP, an essential precursor for DNA biosynthesis. This chain is Thymidylate synthase, found in Bordetella parapertussis (strain 12822 / ATCC BAA-587 / NCTC 13253).